We begin with the raw amino-acid sequence, 410 residues long: 2-oxoisovalerate dehydrogenase subunit alpha (410 aa).

It belongs to the BCKDHA family. In terms of assembly, heterodimer of an alpha and a beta chain. The cofactor is thiamine diphosphate.

It carries out the reaction N(6)-[(R)-lipoyl]-L-lysyl-[protein] + 3-methyl-2-oxobutanoate + H(+) = N(6)-[(R)-S(8)-2-methylpropanoyldihydrolipoyl]-L-lysyl-[protein] + CO2. Its function is as follows. The branched-chain alpha-keto dehydrogenase complex catalyzes the overall conversion of alpha-keto acids to acyl-CoA and CO(2). It contains multiple copies of three enzymatic components: branched-chain alpha-keto acid decarboxylase (E1), lipoamide acyltransferase (E2) and lipoamide dehydrogenase (E3). In Pseudomonas aeruginosa (strain ATCC 15692 / DSM 22644 / CIP 104116 / JCM 14847 / LMG 12228 / 1C / PRS 101 / PAO1), this protein is 2-oxoisovalerate dehydrogenase subunit alpha (bkdA1).